We begin with the raw amino-acid sequence, 289 residues long: MMQRDRWFRCRLSSYQTHRLPPPSEDSVPIATMERTPGLLECEHLNMHYVSEVRSIPSCAPFVVLQEWPMWWDMILSKWEKHVCKIYMRVCVCCATINVDFNQIVRGFERWTIHCHCIKPGSLQCKAGGVVLANWFKMMIYGSLYNLRFPWYREIVNCGMPKEVLFMGSVFVRGRHFIYIRLLYDGHAAIVLERMSFGWSFFSYGIMNNMVVLGCTYCKNLDELSVRCCARRTRRLLAKAVKVLGSFTVRSLMRSLVEPRRQGLLRGLMERYCPFTLADYNRGENPWRA.

This sequence belongs to the adenoviridae E4 30 to 34 kDa protein family. In terms of assembly, interacts with E1B-55k.

It is found in the host nucleus. Its subcellular location is the host cytoplasm. Its function is as follows. Plays a major role to prevent cellular inhibition of viral genome replication by nuclear bodies. Assembles an SCF-like E3 ubiquitin ligase complex based on the cellular proteins ELOB, ELOC, CUL5 and RBX1, in cooperation with viral E1B-55K. This viral RING-type ligase ubiquitinates cellular substrates prior to proteasomal degradation: p53/TP53, LIG4, MRE11-RAD50-NBS1 (MRN) complex, ITGA3, DAXX and BLM. The polypeptide is Early E4 34 kDa protein (Human adenovirus F serotype 40 (HAdV-40)).